The following is a 643-amino-acid chain: 1-deoxy-D-xylulose-5-phosphate synthase (643 aa).

Thiamine diphosphate is bound by residues H78 and 119 to 121 (AHS). D150 provides a ligand contact to Mg(2+). Thiamine diphosphate contacts are provided by residues 151 to 152 (GS), N179, Y288, and E370. Position 179 (N179) interacts with Mg(2+).

The protein belongs to the transketolase family. DXPS subfamily. As to quaternary structure, homodimer. Mg(2+) serves as cofactor. It depends on thiamine diphosphate as a cofactor.

It catalyses the reaction D-glyceraldehyde 3-phosphate + pyruvate + H(+) = 1-deoxy-D-xylulose 5-phosphate + CO2. Its pathway is metabolic intermediate biosynthesis; 1-deoxy-D-xylulose 5-phosphate biosynthesis; 1-deoxy-D-xylulose 5-phosphate from D-glyceraldehyde 3-phosphate and pyruvate: step 1/1. Catalyzes the acyloin condensation reaction between C atoms 2 and 3 of pyruvate and glyceraldehyde 3-phosphate to yield 1-deoxy-D-xylulose-5-phosphate (DXP). In Brucella ovis (strain ATCC 25840 / 63/290 / NCTC 10512), this protein is 1-deoxy-D-xylulose-5-phosphate synthase.